The following is a 45-amino-acid chain: uncharacterized protein (45 aa).

This is an uncharacterized protein from Treponema pallidum (strain Nichols).